Consider the following 222-residue polypeptide: DNA ADP-ribosyl transferase (222 aa).

Residues 12–209 enclose the DarT domain; that stretch reads TLIYHITHLN…PVRVRRSWYY (198 aa). Residues 16 to 18, G25, and L33 each bind NAD(+); that span reads HIT. The NAD(+)-binding element stretch occupies residues 38-56; sequence RPPTQQNVAYGHIQAHRAQ. Residues 47-53 mediate DNA binding; sequence YGHIQAH. Residue R54 participates in NAD(+) binding. R54 (proton acceptor) is an active-site residue. 3 consecutive DNA-binding regions follow at residues 78–83, 148–151, and 154–158; these read RSPMLY, SYWA, and REKKQ. The tract at residues 119–160 is ADP-ribosylating turn-turn loop; that stretch reads TDRHAAVQYVCFFHKLEHLKALDWQAIQASYWANVREKKQAE. E160 is a catalytic residue.

The protein belongs to the DarT ADP-ribosyltransferase family. Interacts with cognate antitoxin DarG (via C-terminus); this heterodimeric complex neutralizes the toxic effect of DarT by preventing ssDNA binding to DarT and consequently inactivating the toxin by direct protein-protein interactions.

It catalyses the reaction a thymidine in DNA + NAD(+) = an N-(ADP-alpha-D-ribosyl)-thymidine in DNA + nicotinamide + H(+). Functionally, toxic component of the hybrid type II/IV toxin-antitoxin (TA) system DarTG, which plays a crucial role in controlling bacterial growth and bacteriophage infection. Its toxic effect is neutralized by cognate antitoxin DarG. In case of phage infection, DarT toxin ADP-ribosylates DNA, which inhibits both viral DNA and RNA synthesis and leads to abortive infection. ADP-ribosylates ssDNA on the second thymidine of the consensus sequence 5'-TNTC-3'; the protein does not auto-modify. Has no activity on dsDNA in vitro. This leads to a decrease in DNA replication. Upon expression in E.coli inhibits cell growth, colony formation and induces the SOS response. Expression leads to bacteriostasis; however if cells grow over an hour in the presence of toxin, growth is no longer restored on antitoxin-inducing plates. In E.coli ADP-ribosylates genomic DNA (gDNA), which induces RecA expression (a marker for DNA damage). This is DNA ADP-ribosyl transferase from Thermus aquaticus (strain ATCC BAA-2747 / Y51MC23).